A 926-amino-acid polypeptide reads, in one-letter code: MAASQNPIQGSLFGGNEESDLNKAEKLKGSERSNVNLSHQQLKEDASLRPRIKQTPKNPNQIIDLDELSRLAIEEPKWSHHNLPKIDDLTPALRHYVELKKENPDRVLLYRLGDFFECFFEDAITLSKLLEITLTSKEAGKKIGKIPMAGIPHHASDRYCTELIKKGLSIAICDQLEAAPTKGNKLIKRGITRLITPGTILEEGMLSAKKNNWLASVLLEAKSNQEIIDWSLAKIDVSTGEFIVQEGQGSNNLRHELIKLNAAEVISEKKSISNKIWYEGLIEITEFNRTSFSNLEAITTIKNHYCLNNIDSLGIHSNSLSIRTIGGLISYLNKTHPNIDDKSNNEIKTNICIDYPRIKNSRSGLIIDSQTRRNLEITSTQKDGKFQGSLLWAIDKTLTAMGARCIRRWIEEPTKDVNAIKNRQNIIGFLVKSSTLRKNIRKTLRAMGDLERLSGRAGAQQAGARDLVAIAEGINRLPLIKNYLNEPIFDKTKYFDSIINIDKDLIELASKINNQIIDNPPLSLTEGGLFYDGINPVLDGLRNQLDDHNIWLNSQELEERKKSNINNLKLQYHRSFGYFLAVSKSKAINVPDHWIRRQTLTNEERFVTPGLKEREGKIFQVRARISELEYELFCDLRKLTGSKSNIIRQAAKAISHLDVLTGLAELAANHNYIQPQIIDMNEQDKSRKLSIIDGRHPVVEQILVDKVFVPNDIELGSKTDLIILSGPNASGKSCYLRQVGLLQIMAQIGSWIPAKSAHMGIADQVFTRVGAVDDLASGQSTFMVEMIETAFILNNATENSLVLLDEIGRGTSTFDGLSIAWSVSEFLAKKIKSRSIFATHYHELNQISEYIENVENYKVVVEYKNHSLSFLHKVERGGANKSYGIEAARLAGVPPDVVNNARLILKNLEKNNSNTIQITKPIESCK.

Positions 1-60 (MAASQNPIQGSLFGGNEESDLNKAEKLKGSERSNVNLSHQQLKEDASLRPRIKQTPKNPN) are disordered. A compositionally biased stretch (basic and acidic residues) spans 20 to 31 (DLNKAEKLKGSE). ATP is bound at residue 726–733 (GPNASGKS).

It belongs to the DNA mismatch repair MutS family.

In terms of biological role, this protein is involved in the repair of mismatches in DNA. It is possible that it carries out the mismatch recognition step. This protein has a weak ATPase activity. The chain is DNA mismatch repair protein MutS from Prochlorococcus marinus (strain NATL2A).